The following is a 304-amino-acid chain: Ribonuclease HII (304 aa).

Positions 1–53 are disordered; that stretch reads MIRDTKQPIKVPAKPASRSGGKAKTVKPKTVKPKAVKAADGKAASAKASTSKA. Positions 24 to 35 are enriched in basic residues; that stretch reads KTVKPKTVKPKA. The span at 36–53 shows a compositional bias: low complexity; sequence VKAADGKAASAKASTSKA. Residues 96–284 enclose the RNase H type-2 domain; sequence WPIAGCDEAG…VAAAWQKIEG (189 aa). Residues D102, E103, and D193 each contribute to the a divalent metal cation site.

The protein belongs to the RNase HII family. Requires Mn(2+) as cofactor. Mg(2+) serves as cofactor.

It is found in the cytoplasm. The enzyme catalyses Endonucleolytic cleavage to 5'-phosphomonoester.. In terms of biological role, endonuclease that specifically degrades the RNA of RNA-DNA hybrids. This chain is Ribonuclease HII, found in Rhodopseudomonas palustris (strain ATCC BAA-98 / CGA009).